The sequence spans 81 residues: MAHSVKIYDTCIGCTQCVRACPTDVLEMIPWDGCKASQIASAPRTEDCVGCKRCESACPTDFLSVRVYLGPETTRSMGLAY.

4Fe-4S ferredoxin-type domains lie at 2 to 31 (AHSV…MIPW) and 39 to 68 (IASA…VRVY). [4Fe-4S] cluster contacts are provided by Cys11, Cys14, Cys17, Cys21, Cys48, Cys51, Cys54, and Cys58.

The eukaryotic PSI reaction center is composed of at least 11 subunits. [4Fe-4S] cluster is required as a cofactor.

It localises to the plastid. The protein resides in the chloroplast thylakoid membrane. It catalyses the reaction reduced [plastocyanin] + hnu + oxidized [2Fe-2S]-[ferredoxin] = oxidized [plastocyanin] + reduced [2Fe-2S]-[ferredoxin]. Functionally, apoprotein for the two 4Fe-4S centers FA and FB of photosystem I (PSI); essential for photochemical activity. FB is the terminal electron acceptor of PSI, donating electrons to ferredoxin. The C-terminus interacts with PsaA/B/D and helps assemble the protein into the PSI complex. Required for binding of PsaD and PsaE to PSI. PSI is a plastocyanin-ferredoxin oxidoreductase, converting photonic excitation into a charge separation, which transfers an electron from the donor P700 chlorophyll pair to the spectroscopically characterized acceptors A0, A1, FX, FA and FB in turn. The polypeptide is Photosystem I iron-sulfur center (Zygnema circumcarinatum (Green alga)).